We begin with the raw amino-acid sequence, 481 residues long: Glutamate--tRNA ligase (481 aa).

Residues 11 to 21 (PSPTGLLHIGN) carry the 'HIGH' region motif. Positions 255 to 259 (KLSKR) match the 'KMSKS' region motif. ATP is bound at residue Lys-258.

This sequence belongs to the class-I aminoacyl-tRNA synthetase family. Glutamate--tRNA ligase type 1 subfamily. In terms of assembly, monomer.

It localises to the cytoplasm. The enzyme catalyses tRNA(Glu) + L-glutamate + ATP = L-glutamyl-tRNA(Glu) + AMP + diphosphate. Its function is as follows. Catalyzes the attachment of glutamate to tRNA(Glu) in a two-step reaction: glutamate is first activated by ATP to form Glu-AMP and then transferred to the acceptor end of tRNA(Glu). The polypeptide is Glutamate--tRNA ligase (Streptococcus pyogenes serotype M3 (strain ATCC BAA-595 / MGAS315)).